The following is a 208-amino-acid chain: Protein-L-isoaspartate O-methyltransferase (208 aa).

S59 is a catalytic residue.

The protein belongs to the methyltransferase superfamily. L-isoaspartyl/D-aspartyl protein methyltransferase family. In terms of assembly, monomer.

The protein localises to the cytoplasm. The enzyme catalyses [protein]-L-isoaspartate + S-adenosyl-L-methionine = [protein]-L-isoaspartate alpha-methyl ester + S-adenosyl-L-homocysteine. Its function is as follows. Catalyzes the methyl esterification of L-isoaspartyl residues in peptides and proteins that result from spontaneous decomposition of normal L-aspartyl and L-asparaginyl residues. It plays a role in the repair and/or degradation of damaged proteins. In Shigella flexneri, this protein is Protein-L-isoaspartate O-methyltransferase (pcm).